The sequence spans 399 residues: Tryptophan synthase beta chain (399 aa).

Position 86 is an N6-(pyridoxal phosphate)lysine (Lys-86).

The protein belongs to the TrpB family. As to quaternary structure, tetramer of two alpha and two beta chains. The cofactor is pyridoxal 5'-phosphate.

It carries out the reaction (1S,2R)-1-C-(indol-3-yl)glycerol 3-phosphate + L-serine = D-glyceraldehyde 3-phosphate + L-tryptophan + H2O. Its pathway is amino-acid biosynthesis; L-tryptophan biosynthesis; L-tryptophan from chorismate: step 5/5. In terms of biological role, the beta subunit is responsible for the synthesis of L-tryptophan from indole and L-serine. The polypeptide is Tryptophan synthase beta chain (trpB) (Buchnera aphidicola subsp. Schizaphis graminum (strain Sg)).